We begin with the raw amino-acid sequence, 166 residues long: MAEENQVAAPEEAQTPFELQIQRIYIKDVSFEAPNLPTIFHQEWKPQLGFELDTETKQLDEDLYEVVLHINVSTTLEDSGDTAFICEVKQAGVFTIKGIEGIQLAHCLASQCPNVLYPYARELISSLVNRGTFPALNLSPVNFDALFMDYLQRQEAEQNAEAPAVN.

The protein belongs to the SecB family. In terms of assembly, homotetramer, a dimer of dimers. One homotetramer interacts with 1 SecA dimer.

It is found in the cytoplasm. In terms of biological role, one of the proteins required for the normal export of preproteins out of the cell cytoplasm. It is a molecular chaperone that binds to a subset of precursor proteins, maintaining them in a translocation-competent state. It also specifically binds to its receptor SecA. In Actinobacillus pleuropneumoniae serotype 5b (strain L20), this protein is Protein-export protein SecB.